Here is a 170-residue protein sequence, read N- to C-terminus: Small ribosomal subunit protein uS4 (170 aa).

In terms of domain architecture, S4 RNA-binding spans 100 to 164; the sequence is RRLQTVVYRE…SDLTDELHPA (65 aa).

The protein belongs to the universal ribosomal protein uS4 family. As to quaternary structure, part of the 30S ribosomal subunit. Contacts protein S5. The interaction surface between S4 and S5 is involved in control of translational fidelity.

Its function is as follows. One of the primary rRNA binding proteins, it binds directly to 16S rRNA where it nucleates assembly of the body of the 30S subunit. Functionally, with S5 and S12 plays an important role in translational accuracy. This is Small ribosomal subunit protein uS4 from Halobacterium salinarum (strain ATCC 29341 / DSM 671 / R1).